A 101-amino-acid polypeptide reads, in one-letter code: uncharacterized protein (101 aa).

A helical membrane pass occupies residues 13 to 33 (FISIMCLFSIPLCFSLSIFFF).

The protein localises to the membrane. This is an uncharacterized protein from Schizosaccharomyces pombe (strain 972 / ATCC 24843) (Fission yeast).